Consider the following 434-residue polypeptide: MDSVEKGAATSVSNPRGRPSRGRPPKLQRNSRGGQGRGVEKPPHLAALILARGGSKGIPLKNIKHLAGVPLIGWVLRAALDSGAFQSVWVSTDHDEIENVAKQFGAQVHRRSSEVSKDSSTSLDAIIEFLNYHNEVDIVGNIQATSPCLHPTDLQKVAEMIREEGYDSVFSVVRRHQFRWSEIQKGVREVTEPLNLNPAKRPRRQDWDGELYENGSFYFAKRHLIEMGYLQGGKMAYYEMRAEHSVDIDVDIDWPIAEQRVLRYGYFGKEKLKEIKLLVCNIDGCLTNGHIYVSGDQKEIISYDVKDAIGISLLKKSGIEVRLISERACSKQTLSSLKLDCKMEVSVSDKLAVVDEWRKEMGLCWKEVAYLGNEVSDEECLKRVGLSGAPADACSTAQKAVGYICKCNGGRGAIREFAEHICLLMEKVNNSCQK.

Met1 is modified (N-acetylmethionine). A disordered region spans residues 1 to 42; it reads MDSVEKGAATSVSNPRGRPSRGRPPKLQRNSRGGQGRGVEKP. The short motif at 15-31 is the BC1 motif element; the sequence is PRGRPSRGRPPKLQRNS. Residues Arg37 and Arg52 each carry the omega-N-methylarginine modification. Substrate-binding residues include Arg52, Asn62, Arg111, Ser120, Ser122, and Gln143. Residues 200–206 carry the BC2 motif motif; that stretch reads KRPRRQD. Arg201 is a catalytic residue. The BC3 motif motif lies at 269–276; the sequence is KEKLKEIK.

This sequence belongs to the CMP-NeuNAc synthase family. In terms of assembly, homotetramer; the active enzyme is formed by a dimer of dimers. Ubiquitously expressed. Expressed in pancreas, kidney, liver, skeletal muscle, lung, placenta, brain, heart, colon, PBL, small intestine, ovary, testis, prostate, thymus and spleen.

It localises to the nucleus. The catalysed reaction is an N-acylneuraminate + CTP = a CMP-N-acyl-beta-neuraminate + diphosphate. It participates in amino-sugar metabolism; N-acetylneuraminate metabolism. Its function is as follows. Catalyzes the activation of N-acetylneuraminic acid (NeuNAc) to cytidine 5'-monophosphate N-acetylneuraminic acid (CMP-NeuNAc), a substrate required for the addition of sialic acid. Has some activity toward NeuNAc, N-glycolylneuraminic acid (Neu5Gc) or 2-keto-3-deoxy-D-glycero-D-galacto-nononic acid (KDN). The polypeptide is N-acylneuraminate cytidylyltransferase (CMAS) (Homo sapiens (Human)).